Here is a 119-residue protein sequence, read N- to C-terminus: Large ribosomal subunit protein uL18 (119 aa).

This sequence belongs to the universal ribosomal protein uL18 family. In terms of assembly, part of the 50S ribosomal subunit; part of the 5S rRNA/L5/L18/L25 subcomplex. Contacts the 5S and 23S rRNAs.

This is one of the proteins that bind and probably mediate the attachment of the 5S RNA into the large ribosomal subunit, where it forms part of the central protuberance. The polypeptide is Large ribosomal subunit protein uL18 (Nitratidesulfovibrio vulgaris (strain DP4) (Desulfovibrio vulgaris)).